We begin with the raw amino-acid sequence, 1813 residues long: Nonribosomal peptide synthetase 1 (1813 aa).

The interval 89–494 (EKARRDPSRQ…GRGDQQVKLR (406 aa)) is adenylation. A Carrier 1 domain is found at 624-699 (EPQSERERQL…ELAITLKHSD (76 aa)). Position 660 is an O-(pantetheine 4'-phosphoryl)serine (S660). Residues 738–1159 (DVYPCTTLQE…LPMTDDELAE (422 aa)) form a condensation 1 region. The 77-residue stretch at 1282–1358 (QVTTPKQQKL…DMADIAKESL (77 aa)) folds into the Carrier 2 domain. At S1319 the chain carries O-(pantetheine 4'-phosphoryl)serine. Residues 1427-1806 (FYLDAAVDQS…STLFQTDVME (380 aa)) form a condensation 2 region.

It belongs to the NRP synthetase family.

It participates in siderophore biosynthesis. Functionally, nonribosomal peptide synthetase; part of the gene cluster that mediates the biosynthesis of hydroxamate-containing siderophores that play a critical role in virulence via intracellular iron acquisition during macrophage infection. This chain is Nonribosomal peptide synthetase 1, found in Ajellomyces capsulatus (Darling's disease fungus).